Here is a 47-residue protein sequence, read N- to C-terminus: Single-stranded DNA-binding protein (47 aa).

In terms of assembly, homodimer in the absence of DNA, monomer when binding DNA.

Functionally, binds preferentially to single-stranded DNA and therefore, destabilizes double-stranded DNA. It is involved in DNA replication, repair and recombination. Binds ss-DNA as the replication fork advances and stimulates the replisome processivity and accuracy. This chain is Single-stranded DNA-binding protein (32), found in Escherichia coli (Bacteriophage RB6).